The chain runs to 630 residues: Ubiquitin carboxyl-terminal hydrolase MINDY-2 (630 aa).

Residues 1–209 (MESGPESLQP…RVPEEEEGAA (209 aa)) form a disordered region. Residues 24-33 (GSPQEGQQET) show a composition bias toward polar residues. Ser-94 is modified (phosphoserine). Composition is skewed to low complexity over residues 141-163 (EESA…SCSD) and 170-191 (SPSL…SSEF). The Nucleophile role is filled by Cys-267. His-449 (proton acceptor) is an active-site residue. The tract at residues 508-560 (GQQDQIDQDYLMALSLQQEQQSQEINWEQIPEGISDLELAKKLQEEEDRRASQ) is ubiquitin-binding domain (UBD). The span at 564-599 (EQEQAAAAAASASASASASASTQAPQSQPVQASPSS) shows a compositional bias: low complexity. The segment at 564–630 (EQEQAAAAAA…EKEKNSCVIL (67 aa)) is disordered. The segment covering 606–630 (SERKRKEPREKDKEKEKEKNSCVIL) has biased composition (basic and acidic residues).

Belongs to the MINDY deubiquitinase family. FAM63 subfamily.

The catalysed reaction is Thiol-dependent hydrolysis of ester, thioester, amide, peptide and isopeptide bonds formed by the C-terminal Gly of ubiquitin (a 76-residue protein attached to proteins as an intracellular targeting signal).. In terms of biological role, hydrolase that can remove 'Lys-48'-linked conjugated ubiquitin from proteins. Can also bind to polyubiquitin chains of different linkage types, including 'Lys-6', 'Lys-11', 'Lys-29', 'Lys-33' and 'Lys-63'. May play a regulatory role at the level of protein turnover. The polypeptide is Ubiquitin carboxyl-terminal hydrolase MINDY-2 (MINDY2) (Bos taurus (Bovine)).